The following is a 218-amino-acid chain: GCN5-related N-acetyltransferase 9 (218 aa).

The 148-residue stretch at 36–183 (SALLEATGSE…KEVTLEYPVT (148 aa)) folds into the N-acetyltransferase domain. Residues 112–114 (MIA), 120–125 (GKGLGK), 152–154 (NTA), and Phe-159 contribute to the acetyl-CoA site.

This sequence belongs to the acetyltransferase family. GNAT subfamily. In terms of assembly, oligomer. In terms of tissue distribution, expressed throughout the plant.

Its subcellular location is the cytoplasm. The protein localises to the nucleus. It carries out the reaction an N-terminal L-alpha-aminoacyl-[protein] + acetyl-CoA = N-terminal N(alpha)-acetyl-L-alpha-aminoacyl-[protein] + CoA + H(+). The catalysed reaction is L-lysyl-[protein] + acetyl-CoA = N(6)-acetyl-L-lysyl-[protein] + CoA + H(+). Probable protein acetyltransferase with dual specificity triggering both N-alpha-acetylation (NTA) and epsilon-lysine acetylation (KA). The chain is GCN5-related N-acetyltransferase 9 from Arabidopsis thaliana (Mouse-ear cress).